The primary structure comprises 268 residues: 3-methyl-2-oxobutanoate hydroxymethyltransferase (268 aa).

Mg(2+)-binding residues include aspartate 44 and aspartate 83. 3-methyl-2-oxobutanoate is bound by residues 44 to 45, aspartate 83, and lysine 113; that span reads DS. Glutamate 115 is a Mg(2+) binding site. Glutamate 182 functions as the Proton acceptor in the catalytic mechanism.

The protein belongs to the PanB family. Homodecamer; pentamer of dimers. Requires Mg(2+) as cofactor.

The protein localises to the cytoplasm. The enzyme catalyses 3-methyl-2-oxobutanoate + (6R)-5,10-methylene-5,6,7,8-tetrahydrofolate + H2O = 2-dehydropantoate + (6S)-5,6,7,8-tetrahydrofolate. Its pathway is cofactor biosynthesis; (R)-pantothenate biosynthesis; (R)-pantoate from 3-methyl-2-oxobutanoate: step 1/2. In terms of biological role, catalyzes the reversible reaction in which hydroxymethyl group from 5,10-methylenetetrahydrofolate is transferred onto alpha-ketoisovalerate to form ketopantoate. This is 3-methyl-2-oxobutanoate hydroxymethyltransferase from Synechococcus elongatus (strain ATCC 33912 / PCC 7942 / FACHB-805) (Anacystis nidulans R2).